A 111-amino-acid polypeptide reads, in one-letter code: Large ribosomal subunit protein uL23 (111 aa).

This sequence belongs to the universal ribosomal protein uL23 family. Part of the 50S ribosomal subunit. Contacts protein L29, and trigger factor when it is bound to the ribosome.

Its function is as follows. One of the early assembly proteins it binds 23S rRNA. One of the proteins that surrounds the polypeptide exit tunnel on the outside of the ribosome. Forms the main docking site for trigger factor binding to the ribosome. The polypeptide is Large ribosomal subunit protein uL23 (Chlamydia abortus (strain DSM 27085 / S26/3) (Chlamydophila abortus)).